The primary structure comprises 208 residues: Elongation factor Ts, chloroplastic (208 aa).

It belongs to the EF-Ts family.

The protein localises to the plastid. The protein resides in the chloroplast. In terms of biological role, associates with the EF-Tu.GDP complex and induces the exchange of GDP to GTP. It remains bound to the aminoacyl-tRNA.EF-Tu.GTP complex up to the GTP hydrolysis stage on the ribosome. In Cyanidium caldarium (Red alga), this protein is Elongation factor Ts, chloroplastic (tsf).